We begin with the raw amino-acid sequence, 215 residues long: UPF0441 protein SG0265 (215 aa).

Belongs to the UPF0441 family.

In Sodalis glossinidius (strain morsitans), this protein is UPF0441 protein SG0265.